A 566-amino-acid polypeptide reads, in one-letter code: Glucose starvation modulator protein 1 (566 aa).

The segment at residues 20–48 (CVFCHQKHLQCSNERPCKNCVKRNIAHGC) is a DNA-binding region (zn(2)-C6 fungal-type). Disordered regions lie at residues 63–92 (GVPG…SPMD) and 250–270 (KQAS…NTLS). A compositionally biased stretch (low complexity) spans 253–270 (SPSPSNTSTSENNTNTLS).

It belongs to the ERT1/acuK family.

Its subcellular location is the nucleus. Transcription factor which regulates nonfermentable carbon utilization. This is Glucose starvation modulator protein 1 (GSM1) from Candida albicans (strain WO-1) (Yeast).